The sequence spans 218 residues: Protein-L-isoaspartate O-methyltransferase (218 aa).

S60 is a catalytic residue.

This sequence belongs to the methyltransferase superfamily. L-isoaspartyl/D-aspartyl protein methyltransferase family.

It is found in the cytoplasm. It carries out the reaction [protein]-L-isoaspartate + S-adenosyl-L-methionine = [protein]-L-isoaspartate alpha-methyl ester + S-adenosyl-L-homocysteine. Catalyzes the methyl esterification of L-isoaspartyl residues in peptides and proteins that result from spontaneous decomposition of normal L-aspartyl and L-asparaginyl residues. It plays a role in the repair and/or degradation of damaged proteins. This chain is Protein-L-isoaspartate O-methyltransferase, found in Roseiflexus castenholzii (strain DSM 13941 / HLO8).